The primary structure comprises 229 residues: Phosphoglycolate phosphatase (229 aa).

Catalysis depends on D18, which acts as the Nucleophile. Mg(2+) is bound by residues D18, D20, and D176.

Belongs to the HAD-like hydrolase superfamily. CbbY/CbbZ/Gph/YieH family. It depends on Mg(2+) as a cofactor.

It carries out the reaction 2-phosphoglycolate + H2O = glycolate + phosphate. Its pathway is organic acid metabolism; glycolate biosynthesis; glycolate from 2-phosphoglycolate: step 1/1. Functionally, specifically catalyzes the dephosphorylation of 2-phosphoglycolate. Is involved in the dissimilation of the intracellular 2-phosphoglycolate formed during the DNA repair of 3'-phosphoglycolate ends, a major class of DNA lesions induced by oxidative stress. The polypeptide is Phosphoglycolate phosphatase (Xylella fastidiosa (strain Temecula1 / ATCC 700964)).